Here is a 325-residue protein sequence, read N- to C-terminus: tRNA dimethylallyltransferase (325 aa).

12 to 19 (GPTASGKT) provides a ligand contact to ATP. Residue 14–19 (TASGKT) participates in substrate binding. Interaction with substrate tRNA regions lie at residues 37-40 (DSAL), 161-165 (QRIHR), and 244-249 (RCVGYR).

It belongs to the IPP transferase family. Monomer. Mg(2+) serves as cofactor.

It catalyses the reaction adenosine(37) in tRNA + dimethylallyl diphosphate = N(6)-dimethylallyladenosine(37) in tRNA + diphosphate. In terms of biological role, catalyzes the transfer of a dimethylallyl group onto the adenine at position 37 in tRNAs that read codons beginning with uridine, leading to the formation of N6-(dimethylallyl)adenosine (i(6)A). This Chromobacterium violaceum (strain ATCC 12472 / DSM 30191 / JCM 1249 / CCUG 213 / NBRC 12614 / NCIMB 9131 / NCTC 9757 / MK) protein is tRNA dimethylallyltransferase.